Reading from the N-terminus, the 518-residue chain is Integrator complex subunit 14 (518 aa).

A VWFA domain is found at 2–204 (PTVVVMDVSL…KNVQSMFGKL (203 aa)). 3 residues coordinate Mg(2+): S10, S12, and T86. K418 bears the N6-acetyllysine mark.

It belongs to the Integrator subunit 14 family. Component of the Integrator complex, composed of core subunits INTS1, INTS2, INTS3, INTS4, INTS5, INTS6, INTS7, INTS8, INTS9/RC74, INTS10, INTS11/CPSF3L, INTS12, INTS13, INTS14 and INTS15. The core complex associates with protein phosphatase 2A subunits PPP2CA and PPP2R1A, to form the Integrator-PP2A (INTAC) complex. INTS14 is part of the tail subcomplex, composed of INTS10, INTS13, INTS14 and INTS15. In terms of tissue distribution, strongly expressed in numerous cancer cells compared with their non-cancerous counterparts (lung, prostate, colon, stomach and skin).

It localises to the nucleus. Its function is as follows. Component of the integrator complex, a multiprotein complex that terminates RNA polymerase II (Pol II) transcription in the promoter-proximal region of genes. The integrator complex provides a quality checkpoint during transcription elongation by driving premature transcription termination of transcripts that are unfavorably configured for transcriptional elongation: the complex terminates transcription by (1) catalyzing dephosphorylation of the C-terminal domain (CTD) of Pol II subunit POLR2A/RPB1 and SUPT5H/SPT5, (2) degrading the exiting nascent RNA transcript via endonuclease activity and (3) promoting the release of Pol II from bound DNA. The integrator complex is also involved in terminating the synthesis of non-coding Pol II transcripts, such as enhancer RNAs (eRNAs), small nuclear RNAs (snRNAs), telomerase RNAs and long non-coding RNAs (lncRNAs). Within the integrator complex, INTS14 is part of the integrator tail module that acts as a platform for the recruitment of transcription factors at promoters. This is Integrator complex subunit 14 from Homo sapiens (Human).